Reading from the N-terminus, the 71-residue chain is uncharacterized protein (71 aa).

Belongs to the ycf40 family.

Its subcellular location is the plastid. The protein resides in the chloroplast. This is an uncharacterized protein from Pyropia yezoensis (Susabi-nori).